The following is a 492-amino-acid chain: NAD(P)H-quinone oxidoreductase subunit 2 A, chloroplastic (492 aa).

The next 13 membrane-spanning stretches (helical) occupy residues 6 to 26, 39 to 59, 81 to 101, 106 to 126, 131 to 151, 165 to 185, 209 to 229, 277 to 297, 305 to 325, 329 to 349, 377 to 397, 400 to 420, and 466 to 486; these read LLLF…GLIL, TPWL…ALLF, VFQF…VEYI, MAIT…MFLC, LITI…LSGY, YLLM…WLYG, PGIS…LSPA, WHLL…LIAI, MLAY…IVGD, GYAS…GTFA, ALSS…AGFF, LHLF…IGLL, and MIVC…IIAI.

It belongs to the complex I subunit 2 family. NDH is composed of at least 16 different subunits, 5 of which are encoded in the nucleus.

It localises to the plastid. Its subcellular location is the chloroplast thylakoid membrane. The enzyme catalyses a plastoquinone + NADH + (n+1) H(+)(in) = a plastoquinol + NAD(+) + n H(+)(out). The catalysed reaction is a plastoquinone + NADPH + (n+1) H(+)(in) = a plastoquinol + NADP(+) + n H(+)(out). In terms of biological role, NDH shuttles electrons from NAD(P)H:plastoquinone, via FMN and iron-sulfur (Fe-S) centers, to quinones in the photosynthetic chain and possibly in a chloroplast respiratory chain. The immediate electron acceptor for the enzyme in this species is believed to be plastoquinone. Couples the redox reaction to proton translocation, and thus conserves the redox energy in a proton gradient. This is NAD(P)H-quinone oxidoreductase subunit 2 A, chloroplastic from Illicium oligandrum (Star anise).